Consider the following 150-residue polypeptide: SsrA-binding protein (150 aa).

A disordered region spans residues 127-150 (KRETEKQRDWQREKARIMKGDAKD).

Belongs to the SmpB family.

The protein resides in the cytoplasm. Required for rescue of stalled ribosomes mediated by trans-translation. Binds to transfer-messenger RNA (tmRNA), required for stable association of tmRNA with ribosomes. tmRNA and SmpB together mimic tRNA shape, replacing the anticodon stem-loop with SmpB. tmRNA is encoded by the ssrA gene; the 2 termini fold to resemble tRNA(Ala) and it encodes a 'tag peptide', a short internal open reading frame. During trans-translation Ala-aminoacylated tmRNA acts like a tRNA, entering the A-site of stalled ribosomes, displacing the stalled mRNA. The ribosome then switches to translate the ORF on the tmRNA; the nascent peptide is terminated with the 'tag peptide' encoded by the tmRNA and targeted for degradation. The ribosome is freed to recommence translation, which seems to be the essential function of trans-translation. The chain is SsrA-binding protein from Cupriavidus necator (strain ATCC 17699 / DSM 428 / KCTC 22496 / NCIMB 10442 / H16 / Stanier 337) (Ralstonia eutropha).